The chain runs to 478 residues: Proline--tRNA ligase (478 aa).

The protein belongs to the class-II aminoacyl-tRNA synthetase family. ProS type 3 subfamily. In terms of assembly, homodimer.

The protein localises to the cytoplasm. The enzyme catalyses tRNA(Pro) + L-proline + ATP = L-prolyl-tRNA(Pro) + AMP + diphosphate. In terms of biological role, catalyzes the attachment of proline to tRNA(Pro) in a two-step reaction: proline is first activated by ATP to form Pro-AMP and then transferred to the acceptor end of tRNA(Pro). The chain is Proline--tRNA ligase from Methanothrix thermoacetophila (strain DSM 6194 / JCM 14653 / NBRC 101360 / PT) (Methanosaeta thermophila).